The sequence spans 966 residues: Phosphoenolpyruvate carboxylase, housekeeping isozyme (966 aa).

S11 bears the Phosphoserine mark. Residues H172 and K601 contribute to the active site.

The protein belongs to the PEPCase type 1 family. As to quaternary structure, homotetramer. Requires Mg(2+) as cofactor.

Its subcellular location is the cytoplasm. The enzyme catalyses oxaloacetate + phosphate = phosphoenolpyruvate + hydrogencarbonate. Its activity is regulated as follows. By light-reversible phosphorylation. In terms of biological role, through the carboxylation of phosphoenolpyruvate (PEP) it forms oxaloacetate, a four-carbon dicarboxylic acid source for the tricarboxylic acid cycle. This chain is Phosphoenolpyruvate carboxylase, housekeeping isozyme, found in Saccharum hybrid (Sugarcane).